The chain runs to 222 residues: MKFGKEIAKKNQIIYRYIILKIQSFEWPANTRIFSERQLEIRFNSSRSQIRSVLATLLNKNIIRYTKNTPGYFVCKDVGFSFFHKTQDNLKVKYAKLSTLIKKLLSQDDASVFANIDSTVHLDKFKGIEAKFFDENKKHFLNVCFFAKDDILNILDENNLQQQFFREFAYNGIAIEKRHCVTSVDKESGCLVMYDMYYDDNDNFVVASKSNFLNPELKVINA.

In terms of domain architecture, HTH gntR-type spans 8 to 77 (AKKNQIIYRY…NTPGYFVCKD (70 aa)).

This is an uncharacterized protein from Mycoplasma genitalium (strain ATCC 33530 / DSM 19775 / NCTC 10195 / G37) (Mycoplasmoides genitalium).